Reading from the N-terminus, the 241-residue chain is 2-C-methyl-D-erythritol 4-phosphate cytidylyltransferase (241 aa).

This sequence belongs to the IspD/TarI cytidylyltransferase family. IspD subfamily. As to quaternary structure, homodimer.

The catalysed reaction is 2-C-methyl-D-erythritol 4-phosphate + CTP + H(+) = 4-CDP-2-C-methyl-D-erythritol + diphosphate. It participates in isoprenoid biosynthesis; isopentenyl diphosphate biosynthesis via DXP pathway; isopentenyl diphosphate from 1-deoxy-D-xylulose 5-phosphate: step 2/6. Its function is as follows. Catalyzes the formation of 4-diphosphocytidyl-2-C-methyl-D-erythritol from CTP and 2-C-methyl-D-erythritol 4-phosphate (MEP). In Yersinia pseudotuberculosis serotype IB (strain PB1/+), this protein is 2-C-methyl-D-erythritol 4-phosphate cytidylyltransferase.